A 215-amino-acid chain; its full sequence is Thymidylate kinase (215 aa).

Residue 12–19 (GLEGAGKT) participates in ATP binding.

This sequence belongs to the thymidylate kinase family.

The catalysed reaction is dTMP + ATP = dTDP + ADP. In terms of biological role, phosphorylation of dTMP to form dTDP in both de novo and salvage pathways of dTTP synthesis. In Halorhodospira halophila (strain DSM 244 / SL1) (Ectothiorhodospira halophila (strain DSM 244 / SL1)), this protein is Thymidylate kinase.